We begin with the raw amino-acid sequence, 346 residues long: Uroporphyrinogen decarboxylase (346 aa).

Substrate contacts are provided by residues 21 to 25 (RQAGR), Asp71, Tyr146, Ser201, and His316.

The protein belongs to the uroporphyrinogen decarboxylase family. As to quaternary structure, homodimer.

The protein resides in the cytoplasm. The catalysed reaction is uroporphyrinogen III + 4 H(+) = coproporphyrinogen III + 4 CO2. Its pathway is porphyrin-containing compound metabolism; protoporphyrin-IX biosynthesis; coproporphyrinogen-III from 5-aminolevulinate: step 4/4. In terms of biological role, catalyzes the decarboxylation of four acetate groups of uroporphyrinogen-III to yield coproporphyrinogen-III. In Rickettsia africae (strain ESF-5), this protein is Uroporphyrinogen decarboxylase.